The primary structure comprises 152 residues: UPF0225 protein YchJ (152 aa).

It belongs to the UPF0225 family.

This Escherichia coli O7:K1 (strain IAI39 / ExPEC) protein is UPF0225 protein YchJ.